Reading from the N-terminus, the 258-residue chain is MYTTGLIGKNINYSESPEIHNNYYKKNNIPFFYKIFNLKQDQIDDFIKNLHKNNIKGFNVTIPYKETILQYLNDIVYPADKIGAVNTVAVQEDKLIGYNTDYIGFIKSLQYYNIQVKNFKCLIIGSGGSAKCIYYALKELNARDICIVSRNPEKARLKFEKKVKILNIKDENKLDRYDLIVNCTPIGGPNLKEQKPIELKEIKKNCVVYDLNYTPKRSKLLKEAKENGAFIINGEKMLIFQAYSAIGLWCLNGIKGGR.

Shikimate is bound by residues 14–16 and Thr61; that span reads SES. Lys65 serves as the catalytic Proton acceptor. The shikimate site is built by Asn86 and Asp101. NADP(+) contacts are provided by residues 125-129 and Leu211; that span reads GSGGS. Tyr213 contributes to the shikimate binding site. Gly234 lines the NADP(+) pocket.

The protein belongs to the shikimate dehydrogenase family. Homodimer.

It carries out the reaction shikimate + NADP(+) = 3-dehydroshikimate + NADPH + H(+). It functions in the pathway metabolic intermediate biosynthesis; chorismate biosynthesis; chorismate from D-erythrose 4-phosphate and phosphoenolpyruvate: step 4/7. Involved in the biosynthesis of the chorismate, which leads to the biosynthesis of aromatic amino acids. Catalyzes the reversible NADPH linked reduction of 3-dehydroshikimate (DHSA) to yield shikimate (SA). The sequence is that of Shikimate dehydrogenase (NADP(+)) from Clostridium botulinum (strain ATCC 19397 / Type A).